A 723-amino-acid polypeptide reads, in one-letter code: MAKTPIPFTTLNDLPDVILSNIIAAVSDTRSRNATALVCHKWLVLERSTRTSLTLRGNIRDLFMLPTCFRSITYLDLSLISPWGHPLLASRATDAPDNDSALIAHLLRHTFPSVTSLTLYARDPNTIQFLPAQWAHTLKHIKLVRWHQRAQLASGDELNLLFIGTPQITSLDLSNFYCWTDDVPPALQSNPNVACNLTRFNLLNASFPEGFKTDEIKVITKCCPNLKEFKVACMFDPRYIGFIGDEALVCLATNCPKLSVLHLADTSVLSNCRGDPNDEGFTVEDAQFSVSTLIEVFSGLSLLEELVFDVCNNVRDSGPALEILKTKCPKLRSLKLGQFHGISMPIESKLDGVALCQGLLSLSIRSVGDLDDMGLIGIGRGCSRLTKFEIECCKKITMRGMRTLASLLRKSLVDVTISCCKNLGASSSLKALEPIQDRIQRLHIDCVWDTVEEFENLDGVEYGFDLNEASGGEASSNPAGFGDTFGSMDDDLMNNRNKRCKYSYDLNSVYVENNGHGNGFCGRTWDRLQYLSLWIGVGELLTPLAAAGLQDCPKLEEIKIKVEGDCRLWSKPSERAFGLSTLIQYPKLVKMHLDCGDIIGYAHTAPSGQMDLSLWERFYLMGIRHLNLRELDYWPPQDRDVNQRSLSLPAAGLLQECVTLRKLFIHGTAHEHFMMFLLRIPNLRDVQLREDYYPAPENDMSTEMRADSLSRFEVALNRRQICD.

An F-box domain is found at 2 to 55; that stretch reads AKTPIPFTTLNDLPDVILSNIIAAVSDTRSRNATALVCHKWLVLERSTRTSLTL.

Part of a putative SCF (SKP1/Cullin/F-box) ubiquitin ligase complex. Interacts with KAI2IA in the presence of (-)-germacrene D. Mainly expressed in fully expanded leaves, lateral roots, axillary and shoot apex, and, to a lower extent, in internodes and nodes.

The protein localises to the nucleus. Its subcellular location is the cytoplasm. Its function is as follows. Component of SCF(ASK-cullin-F-box) E3 ubiquitin ligase complexes, which may mediate the ubiquitination and subsequent proteasomal degradation of target proteins. Is necessary for responses to strigolactones and may be involved in the ubiquitin-mediated degradation of specific proteins that activate axillary growth. Targets probably SMAX1A to degradation upon the formation of an E3 SCF ubiquitin ligase complex (ASK-cullin-F-box) containing MAX2B and KAI2IA in response to (-)-germacrene D in the stigma. The protein is F-box protein MAX2 homolog B of Petunia hybrida (Petunia).